Consider the following 318-residue polypeptide: NADH-quinone oxidoreductase subunit H 2 (318 aa).

The next 9 helical transmembrane spans lie at 4 to 24 (LLIA…AGVF), 77 to 97 (LAPA…AFAP), 106 to 126 (VGVL…VLGA), 146 to 166 (LAYE…AGSF), 179 to 199 (LWFI…GLAA), 214 to 234 (LVAG…FLGE), 238 to 258 (ILLV…GPIL), 262 to 282 (IWFG…RAAL), and 293 to 313 (FAWK…AWIA).

The protein belongs to the complex I subunit 1 family. In terms of assembly, NDH-1 is composed of 14 different subunits. Subunits NuoA, H, J, K, L, M, N constitute the membrane sector of the complex.

The protein localises to the cell inner membrane. The catalysed reaction is a quinone + NADH + 5 H(+)(in) = a quinol + NAD(+) + 4 H(+)(out). Its function is as follows. NDH-1 shuttles electrons from NADH, via FMN and iron-sulfur (Fe-S) centers, to quinones in the respiratory chain. The immediate electron acceptor for the enzyme in this species is believed to be ubiquinone. Couples the redox reaction to proton translocation (for every two electrons transferred, four hydrogen ions are translocated across the cytoplasmic membrane), and thus conserves the redox energy in a proton gradient. This subunit may bind ubiquinone. In Cereibacter sphaeroides (strain ATCC 17023 / DSM 158 / JCM 6121 / CCUG 31486 / LMG 2827 / NBRC 12203 / NCIMB 8253 / ATH 2.4.1.) (Rhodobacter sphaeroides), this protein is NADH-quinone oxidoreductase subunit H 2.